A 282-amino-acid polypeptide reads, in one-letter code: Pyrroline-5-carboxylate reductase (282 aa).

The protein belongs to the pyrroline-5-carboxylate reductase family.

It carries out the reaction L-proline + NADP(+) = (S)-1-pyrroline-5-carboxylate + NADPH + 2 H(+). The catalysed reaction is L-proline + NAD(+) = (S)-1-pyrroline-5-carboxylate + NADH + 2 H(+). It functions in the pathway amino-acid biosynthesis; L-proline biosynthesis; L-proline from L-glutamate 5-semialdehyde: step 1/1. This chain is Pyrroline-5-carboxylate reductase (pro3), found in Schizosaccharomyces pombe (strain 972 / ATCC 24843) (Fission yeast).